The following is a 397-amino-acid chain: MSKPFMFEKPFGMRDTLPEWYKTKKNICDQMTEEINLWGYDMIETPTLEYYETVGVVSAILDQQLFKLLDQQGNTLVLRPDMTAPIARLVASSLKDRAYPLRLAYQSNVYRAQQNEGGKPAEFEQLGVELIGDGTASADGEVIALMIAALKRAGLSEFKVAIGHVGYVNALLMDVVGNEQRADRLRRFLYEKNYVGYREHVKSLNLSTIDKSRLMNLLSLRGGRAAIEEARGLIQTEKGKTALAEMTKLYEVLESYGASEYVKFDLTLVLHMSYYTGVVFEGYGNRLGVPLCSGGRYDELLSKFHRPAQATGFGVRIDLLVEALNGEIISNGHEQTCILFSNERRFEAIELARKKRANGEAVVLQDLAGVTDVDAMSSNYQDVIYCIGTAGRGGEDA.

This sequence belongs to the class-II aminoacyl-tRNA synthetase family. HisZ subfamily. Heteromultimer composed of HisG and HisZ subunits.

It localises to the cytoplasm. The protein operates within amino-acid biosynthesis; L-histidine biosynthesis; L-histidine from 5-phospho-alpha-D-ribose 1-diphosphate: step 1/9. In terms of biological role, required for the first step of histidine biosynthesis. May allow the feedback regulation of ATP phosphoribosyltransferase activity by histidine. The chain is ATP phosphoribosyltransferase regulatory subunit from Halalkalibacterium halodurans (strain ATCC BAA-125 / DSM 18197 / FERM 7344 / JCM 9153 / C-125) (Bacillus halodurans).